The following is a 301-amino-acid chain: UDP-N-acetylenolpyruvoylglucosamine reductase (301 aa).

Residues 27 to 194 form the FAD-binding PCMH-type domain; that stretch reads RVGGPADVVF…LDAIFEGTPD (168 aa). R172 is a catalytic residue. S223 serves as the catalytic Proton donor. E293 is a catalytic residue.

The protein belongs to the MurB family. The cofactor is FAD.

The protein resides in the cytoplasm. It carries out the reaction UDP-N-acetyl-alpha-D-muramate + NADP(+) = UDP-N-acetyl-3-O-(1-carboxyvinyl)-alpha-D-glucosamine + NADPH + H(+). It functions in the pathway cell wall biogenesis; peptidoglycan biosynthesis. Functionally, cell wall formation. In Caulobacter vibrioides (strain NA1000 / CB15N) (Caulobacter crescentus), this protein is UDP-N-acetylenolpyruvoylglucosamine reductase.